A 452-amino-acid chain; its full sequence is Translation initiation factor eIF2B subunit gamma (452 aa).

At Met1 the chain carries N-acetylmethionine. At Ser261 the chain carries Phosphoserine.

It belongs to the eIF-2B gamma/epsilon subunits family. Component of the translation initiation factor 2B (eIF2B) complex which is a heterodecamer of two sets of five different subunits: alpha, beta, gamma, delta and epsilon. Subunits alpha, beta and delta comprise a regulatory subcomplex and subunits epsilon and gamma comprise a catalytic subcomplex. Within the complex, the hexameric regulatory complex resides at the center, with the two heterodimeric catalytic subcomplexes bound on opposite sides.

It localises to the cytoplasm. Its subcellular location is the cytosol. With respect to regulation, activated by the chemical integrated stress response (ISR) inhibitor ISRIB which stimulates guanine nucleotide exchange factor activity for both phosphorylated and unphosphorylated eIF2. Acts as a component of the translation initiation factor 2B (eIF2B) complex, which catalyzes the exchange of GDP for GTP on the eukaryotic initiation factor 2 (eIF2) complex gamma subunit. Its guanine nucleotide exchange factor activity is repressed when bound to eIF2 complex phosphorylated on the alpha subunit, thereby limiting the amount of methionyl-initiator methionine tRNA available to the ribosome and consequently global translation is repressed. The protein is Translation initiation factor eIF2B subunit gamma (EIF2B3) of Bos taurus (Bovine).